Here is a 195-residue protein sequence, read N- to C-terminus: Imidazoleglycerol-phosphate dehydratase (195 aa).

The protein belongs to the imidazoleglycerol-phosphate dehydratase family.

The protein localises to the cytoplasm. The enzyme catalyses D-erythro-1-(imidazol-4-yl)glycerol 3-phosphate = 3-(imidazol-4-yl)-2-oxopropyl phosphate + H2O. It functions in the pathway amino-acid biosynthesis; L-histidine biosynthesis; L-histidine from 5-phospho-alpha-D-ribose 1-diphosphate: step 6/9. In Geobacter sp. (strain M21), this protein is Imidazoleglycerol-phosphate dehydratase.